Here is a 258-residue protein sequence, read N- to C-terminus: uncharacterized protein (258 aa).

Residues 1-20 (MKCFQKLYIFILILIVLMAG) form the signal peptide. Cysteine 21 carries N-palmitoyl cysteine lipidation. Residue cysteine 21 is the site of S-diacylglycerol cysteine attachment.

The protein belongs to the staphylococcal tandem lipoprotein family.

It is found in the cell membrane. This is an uncharacterized protein from Staphylococcus aureus (strain COL).